The following is a 599-amino-acid chain: Aspartate--tRNA(Asp/Asn) ligase (599 aa).

E180 provides a ligand contact to L-aspartate. The segment at 204–207 (QLLK) is aspartate. R226 provides a ligand contact to L-aspartate. ATP contacts are provided by residues 226-228 (RDE) and Q235. H457 lines the L-aspartate pocket. E491 contacts ATP. R498 serves as a coordination point for L-aspartate. 543-546 (GWDR) serves as a coordination point for ATP. Positions 565–599 (KAGGGRDPLTGAPAPISDEQRAETGVDYDPDADEN) are disordered. Positions 590-599 (VDYDPDADEN) are enriched in acidic residues.

Belongs to the class-II aminoacyl-tRNA synthetase family. Type 1 subfamily. As to quaternary structure, homodimer.

The protein localises to the cytoplasm. It carries out the reaction tRNA(Asx) + L-aspartate + ATP = L-aspartyl-tRNA(Asx) + AMP + diphosphate. Its function is as follows. Aspartyl-tRNA synthetase with relaxed tRNA specificity since it is able to aspartylate not only its cognate tRNA(Asp) but also tRNA(Asn). Reaction proceeds in two steps: L-aspartate is first activated by ATP to form Asp-AMP and then transferred to the acceptor end of tRNA(Asp/Asn). The polypeptide is Aspartate--tRNA(Asp/Asn) ligase (Bifidobacterium longum (strain DJO10A)).